Here is a 183-residue protein sequence, read N- to C-terminus: Protein Syd (183 aa).

This sequence belongs to the Syd family.

It is found in the cell inner membrane. Its function is as follows. Interacts with the SecY protein in vivo. May bind preferentially to an uncomplexed state of SecY, thus functioning either as a chelating agent for excess SecY in the cell or as a regulatory factor that negatively controls the translocase function. This Yersinia enterocolitica serotype O:8 / biotype 1B (strain NCTC 13174 / 8081) protein is Protein Syd.